A 319-amino-acid polypeptide reads, in one-letter code: 4-diphosphocytidyl-2-C-methyl-D-erythritol kinase (319 aa).

The active site involves Lys21. ATP is bound at residue 106–116; sequence PIGAGLAGGSS. Asp148 is an active-site residue.

Belongs to the GHMP kinase family. IspE subfamily.

The enzyme catalyses 4-CDP-2-C-methyl-D-erythritol + ATP = 4-CDP-2-C-methyl-D-erythritol 2-phosphate + ADP + H(+). It participates in isoprenoid biosynthesis; isopentenyl diphosphate biosynthesis via DXP pathway; isopentenyl diphosphate from 1-deoxy-D-xylulose 5-phosphate: step 3/6. Functionally, catalyzes the phosphorylation of the position 2 hydroxy group of 4-diphosphocytidyl-2C-methyl-D-erythritol. The polypeptide is 4-diphosphocytidyl-2-C-methyl-D-erythritol kinase (Prochlorococcus marinus (strain MIT 9303)).